The primary structure comprises 122 residues: UPF0344 protein BcerKBAB4_1054 (122 aa).

4 helical membrane passes run 6–26 (ITAW…YSAG), 38–58 (LMYI…VKTA), 65–85 (WYGM…MVLV), and 92–112 (PTGA…YLGL).

This sequence belongs to the UPF0344 family.

The protein resides in the cell membrane. The sequence is that of UPF0344 protein BcerKBAB4_1054 from Bacillus mycoides (strain KBAB4) (Bacillus weihenstephanensis).